A 265-amino-acid polypeptide reads, in one-letter code: tRNA pseudouridine synthase A (265 aa).

Asp-58 acts as the Nucleophile in catalysis. Residue Tyr-116 coordinates substrate.

Belongs to the tRNA pseudouridine synthase TruA family. Homodimer.

The enzyme catalyses uridine(38/39/40) in tRNA = pseudouridine(38/39/40) in tRNA. In terms of biological role, formation of pseudouridine at positions 38, 39 and 40 in the anticodon stem and loop of transfer RNAs. This Neisseria meningitidis serogroup B (strain ATCC BAA-335 / MC58) protein is tRNA pseudouridine synthase A.